Consider the following 149-residue polypeptide: Calmodulin (149 aa).

Ala2 bears the N-acetylalanine mark. EF-hand domains follow at residues 8–43, 44–79, 81–116, and 117–149; these read EQIAEFKEAFSLFDKDGDGTITTKELGTVMRSLGQN, PTEAELQDMINEVNADGNGTIDFPEFLTMMARKMKD, DSEEEIREAFRVFDKDGNGYISAAELRHVMTNLGEK, and LTDEEVDEMIREADIDGDGQVNYEEFVQMMTAK. Asp21, Asp23, Asp25, Thr27, Glu32, Asp59, Asn61, Thr63, Glu68, Asp94, Asp96, Asn98, Tyr100, and Glu105 together coordinate Ca(2+). Lys116 carries the N6,N6,N6-trimethyllysine modification. Ca(2+) is bound by residues Asp130, Asp132, Asp134, Gln136, and Glu141.

The protein belongs to the calmodulin family.

Its function is as follows. Calmodulin acts as part of a calcium signal transduction pathway by mediating the control of a large number of enzymes, ion channels, aquaporins and other proteins through calcium-binding. Calcium-binding is required for the activation of calmodulin. Among the enzymes to be stimulated by the calmodulin-calcium complex are a number of protein kinases, such as myosin light-chain kinases and calmodulin-dependent protein kinase type II (CaMK2), and phosphatases. The chain is Calmodulin from Myxine glutinosa (Atlantic hagfish).